The primary structure comprises 666 residues: MSDSHLTAFDKASKAGFIIALGIVYGDIGTSPLYTMQSLVENQGGVNQVSESFILGSISLIIWTLTLITTIKYVLIALKADNHHEGGIFSLFTLVRKMSPWLIIPAMIGGATLLSDGALTPAVTVTSAIEGLKAVPGLSHIYQNQTNVIITTLVILIVLFGIQRFGTGFIGKIFGPVMFIWFSFLGVSGFFNTLGHLEIFKAINPYYALHLLFSPENHRGIFILGSIFLATTGAEALYSDLGHVGRGNIYVSWPFVKMCIVLSYCGQAAWILANKHSGIELNPFFASVPSQLTVYVVILATLAAIIASQALISGSFTLVSEAMRLKIFPLFRVTYPGANLGQLYIPVINWILFAVTSCTVLYFRTSAHMEAAYGLAITITMLMTTILLNYYLIKEGVKPFLAHLVMTFFALVEFIFFWASAVKFMHGGYVVVILALAIVFVMFIWHAGTRIVFKYVKSLNLNDYKEQIKQLRDDVCFDLYQTNVVYLSNRMQDYMIDRSILYSILDKRPKRARVYWFVNVQVTDEPYTAKYKVDMMGTDYMVRVELYLGFRMPQAVPRYLRTIVHDLMESGRLPKQEQEYTITPGRDVGDFRFVLIEERVSNARQLSNFERFIMQTKASIKHVTASPMRWFGLQYSEVTLEVVPLILSDVLKLPIKELVPVEDSEA.

The next 12 membrane-spanning stretches (helical) occupy residues 16-36 (GFII…LYTM), 58-78 (ISLI…LIAL), 100-120 (PWLI…GALT), 141-161 (IYQN…VLFG), 165-185 (FGTG…FSFL), 221-241 (IFIL…YSDL), 253-273 (WPFV…WILA), 292-312 (LTVY…QALI), 343-363 (LYIP…VLYF), 373-393 (YGLA…YYLI), 399-419 (PFLA…FFWA), and 424-444 (FMHG…VMFI).

It belongs to the HAK/KUP transporter (TC 2.A.72) family.

Its subcellular location is the cell membrane. It catalyses the reaction K(+)(in) + H(+)(in) = K(+)(out) + H(+)(out). Its function is as follows. Transport of potassium into the cell. Likely operates as a K(+):H(+) symporter. This is Probable potassium transport system protein Kup from Streptococcus pyogenes serotype M18 (strain MGAS8232).